The sequence spans 341 residues: Hyaluronan and proteoglycan link protein 2 (341 aa).

Residues 1-27 (MPSWIPLPAFCCLLLPWAFTVFHKTLG) form the signal peptide. The Ig-like V-type domain maps to 35-143 (PHYLLPPIHE…GIEDESVALT (109 aa)). 5 cysteine pairs are disulfide-bonded: Cys-58/Cys-129, Cys-171/Cys-241, Cys-195/Cys-216, Cys-266/Cys-337, and Cys-291/Cys-312. 2 consecutive Link domains span residues 149–243 (VVFP…FCFT) and 246–339 (LAGQ…YCYA).

The protein belongs to the HAPLN family. In terms of tissue distribution, brain.

Its subcellular location is the secreted. The protein localises to the extracellular space. It is found in the extracellular matrix. Mediates a firm binding of versican V2 to hyaluronic acid. May play a pivotal role in the formation of the hyaluronan-associated matrix in the central nervous system (CNS) which facilitates neuronal conduction and general structural stabilization. Binds to hyaluronic acid. The polypeptide is Hyaluronan and proteoglycan link protein 2 (Hapln2) (Rattus norvegicus (Rat)).